Reading from the N-terminus, the 293-residue chain is Inhibitory synaptic factor 1 (293 aa).

Residues 1 to 26 (MNIRGAPDLGQPSDDPSSGGERERIR) form a disordered region. A coiled-coil region spans residues 30-63 (KMVIGQLEGILRELKEVAKELREVVSQIDKLTSD). Disordered stretches follow at residues 120–186 (TPSD…RERV) and 200–293 (DDEE…RGKN). Positions 171-180 (VKSQLPQRTP) are enriched in polar residues. The segment covering 200-215 (DDEEGDGEQEVEEEEV) has biased composition (acidic residues). 2 stretches are compositionally biased toward polar residues: residues 243-256 (SPLT…TLAP) and 264-286 (RNSS…TATR).

The protein belongs to the INSYN1 family. As to quaternary structure, interacts with GPHN.

It is found in the postsynaptic density. Its function is as follows. Component of the protein machinery at the inhibitory synapses, probably acting as a scaffold. Inhibitory synapses dampen neuronal activity through postsynaptic hyperpolarization. This synaptic inhibition is fundamental for the functioning of the central nervous system, shaping and orchestrating the flow of information through neuronal networks to generate a precise neural code. The chain is Inhibitory synaptic factor 1 from Homo sapiens (Human).